The primary structure comprises 287 residues: mRNA-capping enzyme regulatory subunit OPG124 (287 aa).

It belongs to the orthopoxvirus mRNA-capping enzyme regulatory subunit family. In terms of assembly, interacts with the catalytic subunit OPG113.

Its subcellular location is the virion. Functionally, regulatory subunit of the mRNA cap enzyme which stabilizes the catalytic subunit and enhances its methyltransferase activity through an allosteric mechanism. Heterodimeric mRNA capping enzyme catalyzes the linkage of a N7-methyl-guanosine moiety to the first transcribed nucleotide (cap 0 structure), whereas the methyltransferase OPG102 is responsible for a second methylation at the 2'-O position of the ribose (cap 1 structure). Also involved in early viral gene transcription termination and intermediate viral gene transcription initiation. Early gene transcription termination requires the termination factor VTF, the DNA-dependent ATPase NPH-I/OPG123 and the RAP94/OPG109 subunit of the viral RNA polymerase, as well as the presence of a specific termination motif. Binds, together with RAP94/OPG109, to the termination motif 5'-UUUUUNU-3' in the nascent early mRNA. In Vaccinia virus (strain Copenhagen) (VACV), this protein is mRNA-capping enzyme regulatory subunit OPG124 (OPG124).